A 314-amino-acid polypeptide reads, in one-letter code: uncharacterized protein (314 aa).

2 helical membrane-spanning segments follow: residues 23–43 (LALG…MALF) and 98–118 (MASG…GPLT). The segment covering 165–184 (GLGSGAGGGDVGGGGAGGTT) has biased composition (gly residues). Positions 165–314 (GLGSGAGGGD…APDEKTDAGE (150 aa)) are disordered. The span at 190–202 (GPPPVPTSSPPTT) shows a compositional bias: pro residues. Low complexity-rich tracts occupy residues 203 to 212 (PAGAPTKSAT) and 219 to 232 (ASPA…AGMP). Residues 221–241 (PASAHMGAAGMPMVPPGAMGA) traverse the membrane as a helical segment. Positions 294-314 (LLPEHKDFGRIAPDEKTDAGE) are enriched in basic and acidic residues.

The protein localises to the cell membrane. This is an uncharacterized protein from Mycobacterium tuberculosis (strain CDC 1551 / Oshkosh).